A 216-amino-acid polypeptide reads, in one-letter code: Cobalt-zinc-cadmium resistance protein CzcN (216 aa).

A run of 3 helical transmembrane segments spans residues 27–47 (IGVW…GHSR), 50–70 (GTWV…LATV), and 116–136 (ESLA…PAVI).

It to A.xylosoxydans NccN.

The protein resides in the cell inner membrane. Component of the CZC cation-efflux system that confers resistance to cobalt, zinc and cadmium. The chain is Cobalt-zinc-cadmium resistance protein CzcN (czcN) from Cupriavidus metallidurans (strain ATCC 43123 / DSM 2839 / NBRC 102507 / CH34) (Ralstonia metallidurans).